Reading from the N-terminus, the 569-residue chain is Putative diguanylate cyclase DgcQ (569 aa).

2 helical membrane-spanning segments follow: residues 25–45 (LGPG…STLL) and 365–385 (IALT…WYVI). The 136-residue stretch at 433-568 (HPFSVIQVDL…GRNRVFASDN (136 aa)) folds into the GGDEF domain. Position 441 (D441) interacts with Mg(2+). Substrate is bound by residues N449, H454, and D458. E484 serves as a coordination point for Mg(2+). E484 serves as the catalytic Proton acceptor.

Homodimer. The cofactor is Mg(2+).

Its subcellular location is the cell inner membrane. The enzyme catalyses 2 GTP = 3',3'-c-di-GMP + 2 diphosphate. It participates in glycan metabolism; bacterial cellulose biosynthesis. Its pathway is purine metabolism; 3',5'-cyclic di-GMP biosynthesis. Functionally, catalyzes the synthesis of cyclic-di-GMP (c-di-GMP) via the condensation of 2 GTP molecules. Cyclic-di-GMP is a second messenger which controls cell surface-associated traits in bacteria. Involved in the regulation of cellulose production. This Shigella flexneri protein is Putative diguanylate cyclase DgcQ.